A 315-amino-acid chain; its full sequence is DNA-directed RNA polymerase subunit alpha (315 aa).

The tract at residues 1-228 (MLEIEKPKIE…EHFKLFMTLT (228 aa)) is alpha N-terminal domain (alpha-NTD). Residues 245–315 (KEKVLEMTIE…LELGLKQSEE (71 aa)) form an alpha C-terminal domain (alpha-CTD) region.

This sequence belongs to the RNA polymerase alpha chain family. As to quaternary structure, homodimer. The RNAP catalytic core consists of 2 alpha, 1 beta, 1 beta' and 1 omega subunit. When a sigma factor is associated with the core the holoenzyme is formed, which can initiate transcription.

It catalyses the reaction RNA(n) + a ribonucleoside 5'-triphosphate = RNA(n+1) + diphosphate. In terms of biological role, DNA-dependent RNA polymerase catalyzes the transcription of DNA into RNA using the four ribonucleoside triphosphates as substrates. The chain is DNA-directed RNA polymerase subunit alpha from Clostridium tetani (strain Massachusetts / E88).